A 350-amino-acid polypeptide reads, in one-letter code: MIVLGIESSCDETGVGIIDLADDGTMTIVGDAVASSMEQHARFGGVVPEIASRAHLESMIPVMKEALAQAGVERPDAVAATVGPGLAGALLVGASAAKAYAAAWGVPFYGVNHLGGHVAVANLEGEELPHSIALLVSGGHTQILEVQAVGKPMRELGSTLDDAAGEAYDKVARLLGLGYPGGPVVDKLAARGNRKAIRFPRGLSRADDLRGEHRYDFSFSGVKTSVARYVESAEREGRVISVEDVCASFQEAVVDVLTSKAIMACKDTGASVLLLGGGVAANSRLRELAAARCQSASIELRVPSFKLCTDNGVMIAAVASQLIHEGAQPSGLSVGTDTSLEVEIPLVHSL.

His113 and His117 together coordinate Fe cation. Residues 135–139 (LVSGG), Asp169, Gly182, Asp186, and Asn282 each bind substrate. Residue Asp310 coordinates Fe cation.

It belongs to the KAE1 / TsaD family. Fe(2+) is required as a cofactor.

The protein localises to the cytoplasm. The enzyme catalyses L-threonylcarbamoyladenylate + adenosine(37) in tRNA = N(6)-L-threonylcarbamoyladenosine(37) in tRNA + AMP + H(+). In terms of biological role, required for the formation of a threonylcarbamoyl group on adenosine at position 37 (t(6)A37) in tRNAs that read codons beginning with adenine. Is involved in the transfer of the threonylcarbamoyl moiety of threonylcarbamoyl-AMP (TC-AMP) to the N6 group of A37, together with TsaE and TsaB. TsaD likely plays a direct catalytic role in this reaction. This Corynebacterium diphtheriae (strain ATCC 700971 / NCTC 13129 / Biotype gravis) protein is tRNA N6-adenosine threonylcarbamoyltransferase.